The following is a 250-amino-acid chain: Troponin I 1 (250 aa).

2 disordered regions span residues 1 to 59 (MSQI…ERKK) and 194 to 250 (SVFT…ADEE). 2 stretches are compositionally biased toward basic and acidic residues: residues 21 to 45 (DAQRKAQEREAKKAEVRKRLEEAGQ) and 206 to 221 (DKPEWSKKKEEKKEES). Acidic residues predominate over residues 229–250 (PVEEEETAASEGEEEEEEADEE).

The protein belongs to the troponin I family. In terms of tissue distribution, strongly expressed in body wall muscle during embryogenesis, reduces during the larval stages to adult. In late-stage larvae and adults, expression is evident in the proximal gonad of both hermaphrodites and males.

In terms of biological role, troponin I is the inhibitory subunit of troponin, the thin filament regulatory complex which confers calcium-sensitivity to muscle actomyosin ATPase activity. The polypeptide is Troponin I 1 (tni-1) (Caenorhabditis elegans).